The following is a 61-amino-acid chain: Small ribosomal subunit protein uS14 (61 aa).

Zn(2+)-binding residues include C24, C27, C40, and C43.

The protein belongs to the universal ribosomal protein uS14 family. Zinc-binding uS14 subfamily. In terms of assembly, part of the 30S ribosomal subunit. Contacts proteins S3 and S10. Zn(2+) serves as cofactor.

In terms of biological role, binds 16S rRNA, required for the assembly of 30S particles and may also be responsible for determining the conformation of the 16S rRNA at the A site. This chain is Small ribosomal subunit protein uS14, found in Caldicellulosiruptor bescii (strain ATCC BAA-1888 / DSM 6725 / KCTC 15123 / Z-1320) (Anaerocellum thermophilum).